Consider the following 273-residue polypeptide: L-cysteine S-thiosulfotransferase subunit SoxA (273 aa).

The first 24 residues, 1–24 (MKKTVTAVALLCALSSTAIAPTFA), serve as a signal peptide directing secretion. The cysteines at positions 74 and 110 are disulfide-linked. The Cytochrome c domain maps to 162-273 (EMYELGKRMF…GVMLTPGIKR (112 aa)). Cys182 and His186 together coordinate heme. Arg230 contacts substrate. Position 234 (Cys234) interacts with heme. Cys234 acts as the Cysteine persulfide intermediate in catalysis.

It belongs to the SoxA family. Heterodimer of SoxA and SoxX. The cofactor is heme. Cysteine persulfide at Cys-234.

It is found in the periplasm. It carries out the reaction L-cysteinyl-[SoxY protein] + thiosulfate + 2 Fe(III)-[cytochrome c] = S-sulfosulfanyl-L-cysteinyl-[SoxY protein] + 2 Fe(II)-[cytochrome c] + 2 H(+). The enzyme catalyses S-sulfanyl-L-cysteinyl-[SoxY protein] + thiosulfate + 2 Fe(III)-[cytochrome c] = S-(2-sulfodisulfanyl)-L-cysteinyl-[SoxY protein] + 2 Fe(II)-[cytochrome c] + 2 H(+). Its function is as follows. C-type monoheme cytochrome, which is part of the SoxAX cytochrome complex involved in sulfur oxidation. The SoxAX complex catalyzes the formation of a heterodisulfide bond between the conserved cysteine residue on a sulfur carrier SoxYZ complex subunit SoxY and thiosulfate or other inorganic sulfur substrates. This leads to the liberation of two electrons, which may be transferred from the SoxAX complex to another cytochrome c that then channels them into the respiratory electron transport chain. Some electrons may be used for reductive CO(2) fixation. In Hydrogenophilus thermoluteolus (Pseudomonas hydrogenothermophila), this protein is L-cysteine S-thiosulfotransferase subunit SoxA.